The primary structure comprises 453 residues: tRNA modification GTPase MnmE (453 aa).

Residues Arg-23, Glu-80, and Lys-120 each contribute to the (6S)-5-formyl-5,6,7,8-tetrahydrofolate site. Positions 216-375 (GSKIVIIGKP…LIKYLKDLNC (160 aa)) constitute a TrmE-type G domain. Asn-226 is a K(+) binding site. GTP contacts are provided by residues 226–231 (NSGKSS), 245–251 (TSIEGTT), and 270–273 (DTAG). A Mg(2+)-binding site is contributed by Ser-230. The K(+) site is built by Thr-245, Ile-247, and Thr-250. Position 251 (Thr-251) interacts with Mg(2+). A (6S)-5-formyl-5,6,7,8-tetrahydrofolate-binding site is contributed by Lys-453.

It belongs to the TRAFAC class TrmE-Era-EngA-EngB-Septin-like GTPase superfamily. TrmE GTPase family. As to quaternary structure, homodimer. Heterotetramer of two MnmE and two MnmG subunits. K(+) is required as a cofactor.

The protein resides in the cytoplasm. Its function is as follows. Exhibits a very high intrinsic GTPase hydrolysis rate. Involved in the addition of a carboxymethylaminomethyl (cmnm) group at the wobble position (U34) of certain tRNAs, forming tRNA-cmnm(5)s(2)U34. In Wigglesworthia glossinidia brevipalpis, this protein is tRNA modification GTPase MnmE.